Reading from the N-terminus, the 543-residue chain is Carboxypeptidase Y homolog A (543 aa).

A signal peptide spans 1 to 17 (MKFLTTGLLATAALAAA). Positions 18–124 (QEQQVLQAED…KLHNYDLRVK (107 aa)) are excised as a propeptide. Intrachain disulfides connect Cys-179–Cys-419, Cys-313–Cys-327, Cys-337–Cys-360, Cys-344–Cys-353, and Cys-382–Cys-389. Asn-210 carries N-linked (GlcNAc...) asparagine glycosylation. Ser-266 is a catalytic residue. Residue Asp-458 is part of the active site. Residue Asn-509 is glycosylated (N-linked (GlcNAc...) asparagine). His-520 is an active-site residue.

It belongs to the peptidase S10 family.

Its subcellular location is the vacuole. It carries out the reaction Release of a C-terminal amino acid with broad specificity.. Its function is as follows. Vacuolar carboxypeptidase involved in degradation of small peptides. Digests preferentially peptides containing an aliphatic or hydrophobic residue in P1' position, as well as methionine, leucine or phenylalanine in P1 position of ester substrate. This Trichophyton tonsurans (Scalp ringworm fungus) protein is Carboxypeptidase Y homolog A (CPYA).